Here is a 656-residue protein sequence, read N- to C-terminus: DNA mismatch repair protein MutL (656 aa).

It belongs to the DNA mismatch repair MutL/HexB family.

In terms of biological role, this protein is involved in the repair of mismatches in DNA. It is required for dam-dependent methyl-directed DNA mismatch repair. May act as a 'molecular matchmaker', a protein that promotes the formation of a stable complex between two or more DNA-binding proteins in an ATP-dependent manner without itself being part of a final effector complex. In Lactococcus lactis subsp. lactis (strain IL1403) (Streptococcus lactis), this protein is DNA mismatch repair protein MutL.